A 265-amino-acid polypeptide reads, in one-letter code: MKVKSFAKIDLGYSVYKKRKNITKHDFESIFILVESVYDDIEIIKIDKNVDDVHYYNETNEIYVYSRLVYKTLEWIRQTYRIKNHYRINIKKRIPIGAGLGGGSSNAAVIMKSILELEGIKEINYKDVVNKLGADIPFFLSGYKTAYVSDCGSTLEDLSGQFKLSYEVHLMNVNVNTKLVFEKFDDNQWHVIKNNFKTIIKNLKENIVTNIYNDLQEHCFELYPNIRYKYNELLREGFYTILSGAGSSFICIKLKDKENQVIHEN.

The active site involves Lys-8. 95-105 is a binding site for ATP; that stretch reads PIGAGLGGGSS. Asp-135 is a catalytic residue.

This sequence belongs to the GHMP kinase family. IspE subfamily.

It catalyses the reaction 4-CDP-2-C-methyl-D-erythritol + ATP = 4-CDP-2-C-methyl-D-erythritol 2-phosphate + ADP + H(+). It functions in the pathway isoprenoid biosynthesis; isopentenyl diphosphate biosynthesis via DXP pathway; isopentenyl diphosphate from 1-deoxy-D-xylulose 5-phosphate: step 3/6. Its function is as follows. Catalyzes the phosphorylation of the position 2 hydroxy group of 4-diphosphocytidyl-2C-methyl-D-erythritol. The polypeptide is 4-diphosphocytidyl-2-C-methyl-D-erythritol kinase (Ureaplasma urealyticum serovar 10 (strain ATCC 33699 / Western)).